Reading from the N-terminus, the 586-residue chain is Phosphomethylpyrimidine synthase (586 aa).

Positions 1-58 (MKQSVSAEQIELKSSLPGSKKVYVDGPREGMKVPMREIEQSDTNGVPNPPIRVYDTSG) are disordered. Residues 22–39 (VYVDGPREGMKVPMREIE) are compositionally biased toward basic and acidic residues. Substrate contacts are provided by residues asparagine 193, methionine 222, tyrosine 251, histidine 287, 307 to 309 (SRG), 348 to 351 (DGLR), and glutamate 387. Histidine 391 provides a ligand contact to Zn(2+). Position 414 (tyrosine 414) interacts with substrate. Histidine 455 serves as a coordination point for Zn(2+). Residues cysteine 535, cysteine 538, and cysteine 543 each coordinate [4Fe-4S] cluster.

This sequence belongs to the ThiC family. Requires [4Fe-4S] cluster as cofactor.

It carries out the reaction 5-amino-1-(5-phospho-beta-D-ribosyl)imidazole + S-adenosyl-L-methionine = 4-amino-2-methyl-5-(phosphooxymethyl)pyrimidine + CO + 5'-deoxyadenosine + formate + L-methionine + 3 H(+). It functions in the pathway cofactor biosynthesis; thiamine diphosphate biosynthesis. Functionally, catalyzes the synthesis of the hydroxymethylpyrimidine phosphate (HMP-P) moiety of thiamine from aminoimidazole ribotide (AIR) in a radical S-adenosyl-L-methionine (SAM)-dependent reaction. The chain is Phosphomethylpyrimidine synthase from Bacillus thuringiensis (strain Al Hakam).